A 399-amino-acid polypeptide reads, in one-letter code: Serine palmitoyltransferase (399 aa).

Pyridoxal 5'-phosphate is bound by residues 113–114 (GF), His213, Thr241, and Ser243. N6-(pyridoxal phosphate)lysine is present on Lys244.

It belongs to the class-II pyridoxal-phosphate-dependent aminotransferase family. Homodimer. It depends on pyridoxal 5'-phosphate as a cofactor.

The protein localises to the cytoplasm. It is found in the cell inner membrane. The catalysed reaction is L-serine + hexadecanoyl-CoA + H(+) = 3-oxosphinganine + CO2 + CoA. Its pathway is lipid metabolism; sphingolipid metabolism. Catalyzes the condensation of L-serine with palmitoyl-CoA (hexadecanoyl-CoA) to produce 3-oxosphinganine. Exhibits a broad substrate specificity concerning the chain length and the degree of unsaturation of acyl-CoA. This chain is Serine palmitoyltransferase, found in Sphingobacterium multivorum.